The sequence spans 376 residues: Protein-glutamate methylesterase/protein-glutamine glutaminase (376 aa).

One can recognise a Response regulatory domain in the interval 4–121 (KVLVVDDSSF…ARNRDEAVSL (118 aa)). A 4-aspartylphosphate modification is found at Asp-55. Positions 142–161 (SSQSTSTVESRTATTRTATS) are disordered. A compositionally biased stretch (low complexity) spans 145 to 161 (STSTVESRTATTRTATS). The CheB-type methylesterase domain occupies 183-376 (TGKKYQLTAI…ERMLVEVGLK (194 aa)). Active-site residues include Ser-195, His-222, and Asp-318.

It belongs to the CheB family. Post-translationally, phosphorylated by CheA. Phosphorylation of the N-terminal regulatory domain activates the methylesterase activity.

It localises to the cytoplasm. The catalysed reaction is [protein]-L-glutamate 5-O-methyl ester + H2O = L-glutamyl-[protein] + methanol + H(+). It carries out the reaction L-glutaminyl-[protein] + H2O = L-glutamyl-[protein] + NH4(+). In terms of biological role, involved in chemotaxis. Part of a chemotaxis signal transduction system that modulates chemotaxis in response to various stimuli. Catalyzes the demethylation of specific methylglutamate residues introduced into the chemoreceptors (methyl-accepting chemotaxis proteins or MCP) by CheR. Also mediates the irreversible deamidation of specific glutamine residues to glutamic acid. The chain is Protein-glutamate methylesterase/protein-glutamine glutaminase from Aliivibrio fischeri (strain ATCC 700601 / ES114) (Vibrio fischeri).